We begin with the raw amino-acid sequence, 434 residues long: Serine--tRNA ligase (434 aa).

Residue 230–232 (TSE) participates in L-serine binding. ATP contacts are provided by residues 261-263 (RRE) and Val277. Glu284 contacts L-serine. 348–351 (ELTS) is an ATP binding site. Residue Thr393 participates in L-serine binding.

This sequence belongs to the class-II aminoacyl-tRNA synthetase family. Type-1 seryl-tRNA synthetase subfamily. In terms of assembly, homodimer. The tRNA molecule binds across the dimer.

It is found in the cytoplasm. It catalyses the reaction tRNA(Ser) + L-serine + ATP = L-seryl-tRNA(Ser) + AMP + diphosphate + H(+). It carries out the reaction tRNA(Sec) + L-serine + ATP = L-seryl-tRNA(Sec) + AMP + diphosphate + H(+). The protein operates within aminoacyl-tRNA biosynthesis; selenocysteinyl-tRNA(Sec) biosynthesis; L-seryl-tRNA(Sec) from L-serine and tRNA(Sec): step 1/1. Functionally, catalyzes the attachment of serine to tRNA(Ser). Is also able to aminoacylate tRNA(Sec) with serine, to form the misacylated tRNA L-seryl-tRNA(Sec), which will be further converted into selenocysteinyl-tRNA(Sec). The sequence is that of Serine--tRNA ligase from Kocuria rhizophila (strain ATCC 9341 / DSM 348 / NBRC 103217 / DC2201).